The sequence spans 214 residues: Histone H1.1 (214 aa).

The segment at 1–43 is disordered; the sequence is MSETAPVPQPASVAPEKPAATKKTRKPAKAAVPRKKPAGPSVS. At Ser-2 the chain carries N-acetylserine. Phosphoserine occurs at positions 2 and 12. Residue Lys-17 is modified to N6-acetyllysine. Residues 20-37 show a composition bias toward basic residues; that stretch reads ATKKTRKPAKAAVPRKKP. Lys-36 is subject to N6-(beta-hydroxybutyryl)lysine. The 74-residue stretch at 38–111 folds into the H15 domain; it reads AGPSVSELIV…GAAGSFKLNK (74 aa). At Ser-43 the chain carries Phosphoserine. Lys-54 is subject to N6-(beta-hydroxybutyryl)lysine. Citrulline is present on Arg-56. Position 66 is an N6-(beta-hydroxybutyryl)lysine (Lys-66). Residue Ser-67 is modified to Phosphoserine. N6-acetyllysine is present on Lys-77. N6-(beta-hydroxybutyryl)lysine is present on Lys-87. Position 92 is an N6-(beta-hydroxybutyryl)lysine; alternate (Lys-92). N6-acetyllysine; alternate is present on Lys-92. Residues 93–214 form a disordered region; that stretch reads GTLVQTKGTG…KPKKAAPKKK (122 aa). Ser-106 is modified (phosphoserine). N6-(beta-hydroxybutyryl)lysine is present on Lys-108. The span at 116–144 shows a compositional bias: low complexity; the sequence is KASTTKVTVKAKASGAAKKPKKTAGAAAK. Lys-121 carries the post-translational modification N6-acetyllysine. Composition is skewed to basic residues over residues 145-179 and 186-214; these read KTVKTPKKPKKPAVSKKTSSKSPKKPKVVKAKKVA and KAVKPKAAKVKVTKPKTPAKPKKAAPKKK. Thr-202 carries the phosphothreonine modification.

Belongs to the histone H1/H5 family. As to quaternary structure, interacts with DFFB. In terms of processing, H1 histones are progressively phosphorylated during the cell cycle, becoming maximally phosphorylated during late G2 phase and M phase, and being dephosphorylated sharply thereafter. Citrullination at Arg-56 (H1R54ci) by PADI4 takes place within the DNA-binding site of H1 and results in its displacement from chromatin and global chromatin decondensation, thereby promoting pluripotency and stem cell maintenance.

The protein localises to the nucleus. It localises to the chromosome. Functionally, H1 histones bind to linker DNA between nucleosomes forming the macromolecular structure known as the chromatin fiber. H1 histones are necessary for the condensation of nucleosome chains into higher-order structured fibers. Also acts as a regulator of individual gene transcription through chromatin remodeling. This Rattus norvegicus (Rat) protein is Histone H1.1.